Here is a 180-residue protein sequence, read N- to C-terminus: Ribulose bisphosphate carboxylase small subunit, chloroplastic 4 (180 aa).

The transit peptide at 1 to 56 (MASSIVSSAAVATRGNGAQASMVAPFTGLKSTASFPVSRKQNLDITSIASNGGRVS) directs the protein to the chloroplast.

It belongs to the RuBisCO small chain family. Heterohexadecamer of 8 large and 8 small subunits. As to quaternary structure, (Microbial infection) Binds to tobamovirus movement protein; this interaction seems required for viral systemic movement.

The protein localises to the plastid. Its subcellular location is the chloroplast. It localises to the cell junction. The protein resides in the plasmodesma. Its function is as follows. RuBisCO catalyzes two reactions: the carboxylation of D-ribulose 1,5-bisphosphate, the primary event in carbon dioxide fixation, as well as the oxidative fragmentation of the pentose substrate. Both reactions occur simultaneously and in competition at the same active site. Although the small subunit is not catalytic it is essential for maximal activity. Involved in antiviral defenses. This Solanum lycopersicum (Tomato) protein is Ribulose bisphosphate carboxylase small subunit, chloroplastic 4.